Reading from the N-terminus, the 781-residue chain is Catenin beta-1 (781 aa).

Alanine 2 is modified (N-acetylalanine). Residues 2 to 23 (ATQADLMELDMAMEPDRKAAVS) form an interaction with VCL region. The residue at position 23 (serine 23) is a Phosphoserine; by GSK3-beta; alternate. An O-linked (GlcNAc) serine; alternate glycan is attached at serine 23. Residue serine 29 is modified to Phosphoserine; by GSK3-beta. 2 positions are modified to phosphoserine; by GSK3-beta and HIPK2: serine 33 and serine 37. The segment at 34–56 (GIHSGATTTAPSLSGKGNPEEED) is disordered. At threonine 41 the chain carries Phosphothreonine; by GSK3-beta. Serine 45 carries the phosphoserine modification. Position 49 is an N6-acetyllysine (lysine 49). Tyrosine 64 carries the post-translational modification Phosphotyrosine; by PTK6. Tyrosine 142 is subject to Phosphotyrosine; by FYN and PTK6. ARM repeat units lie at residues 151 to 191 (RAIP…IMRS), 193 to 234 (QMVS…IFKS), 235 to 276 (GGIP…VRLA), 277 to 318 (GGLQ…ILAS), 319 to 360 (GGPQ…IVEA), 361 to 389 (GGMQ…RNLS), 400 to 441 (GLLG…VCQV), 442 to 484 (GGIE…AQNA), 489 to 530 (YGLP…LREQ), 531 to 571 (GAIP…EIVE), 594 to 636 (NTIP…AEGA), and 637 to 666 (TAPL…SEDK). Residues 156–178 (LTKLLNDEDQVVVNKAAVMVHQL) are interaction with BCL9. Residue serine 191 is modified to Phosphoserine; by CDK5. Serine 246 bears the Phosphoserine; by CDK5 mark. Residues tyrosine 331 and tyrosine 333 each carry the phosphotyrosine modification. A Phosphoserine; by AMPK modification is found at serine 552. Phosphothreonine is present on threonine 556. Cysteine 619 carries the post-translational modification S-nitrosocysteine. Serine 675 is subject to Phosphoserine. Residues 705–781 (EPLGYRQDDP…NQLAWFDTDL (77 aa)) form a disordered region. Over residues 734–745 (MMEHEMGGHHPG) the composition is skewed to basic and acidic residues. An interaction with SCRIB region spans residues 772 to 781 (NQLAWFDTDL).

This sequence belongs to the beta-catenin family. As to quaternary structure, two separate complex-associated pools are found in the cytoplasm. The majority is present as component of an E-cadherin/ catenin adhesion complex composed of at least E-cadherin/CDH1 and beta-catenin/CTNNB1, and possibly alpha-catenin/CTNNA1; the complex is located to adherens junctions. The stable association of CTNNA1 is controversial as CTNNA1 was shown not to bind to F-actin when assembled in the complex. Alternatively, the CTNNA1-containing complex may be linked to F-actin by other proteins such as LIMA1. Another cytoplasmic pool is part of a large complex containing AXIN1, AXIN2, APC, CSNK1A1 and GSK3B that promotes phosphorylation on N-terminal Ser and Thr residues and ubiquitination of CTNNB1 via BTRC and its subsequent degradation by the proteasome. Wnt-dependent activation of DVL antagonizes the action of GSK3B. When GSK3B activity is inhibited the complex dissociates, CTNNB1 is dephosphorylated and is no longer targeted for destruction. The stabilized protein translocates to the nucleus, where it binds TCF/LEF-1 family members, BCL9, BCL9L and possibly also RUVBL1 and CHD8. Binds CTNNBIP and EP300. CTNNB1 forms a ternary complex with LEF1 and EP300 that is disrupted by CTNNBIP1 binding. Interacts with TAX1BP3 (via the PDZ domain); this interaction inhibits the transcriptional activity of CTNNB1. Interacts with AJAP1, BAIAP1, CARM1, CTNNA3, CXADR and PCDH11Y. Binds NHERF1. Interacts with GLIS2 and SLC30A9. Interacts with XIRP1 and MUC1. Interacts with PTPRU (via the cytoplasmic juxtamembrane domain) and with EMD. Interacts with SCRIB. Interacts with TNIK. Interacts with SESTD1 and TRPC4. Interacts directly with AXIN1; the interaction is regulated by CDK2 phosphorylation of AXIN1. Interacts with CAV1. Interacts with TRPV4. The TRPV4 and CTNNB1 complex can interact with CDH1. Interacts with VCL. Interacts with PTPRJ. Interacts with PKT7. Interacts with FAT1 (via the cytoplasmic domain). Interacts with NANOS1 and NDRG2. Interacts with NEK2, CDK2 and CDK5. Interacts with PTK6. Interacts with SOX7; this interaction may lead to proteasomal degradation of active CTNNB1 and thus inhibition of Wnt/beta-catenin-stimulated transcription. Identified in a complex with HINT1 and MITF. Interacts with FHIT. The CTNNB1 and TCF4 complex interacts with PML. Interacts with FERMT2. Identified in a complex with TCF4 and FERMT2. Interacts with RORA. May interact with P-cadherin/CDH3. Interacts with RAPGEF2. Interacts with RNF220. Interacts with CTNND2. Interacts (via the C-terminal region) with CBY1. The complex composed, at least, of APC, CTNNB1 and GSK3B interacts with JPT1; the interaction requires the inactive form of GSK3B (phosphorylated at 'Ser-9'). Interacts with DLG5. Interacts with FAM53B; promoting translocation to the nucleus. Interacts with TMEM170B. Interacts with AHI1. Interacts with GID8. Component of an cadherin:catenin adhesion complex composed of at least of CDH26, beta-catenin/CTNNB1, alpha-catenin/CTNNA1 and p120 catenin/CTNND1. Forms a complex comprising APPL1, RUVBL2, APPL2, HDAC1 and HDAC2. Interacts with IRF2BPL; mediates the ubiquitination and degradation of CTNNB1. Interacts with LMBR1L and AMFR. Interacts with LMBR1L. Interacts with SOX30; prevents interaction of CTNNB1 with TCF7L2/TCF4 and leads to inhibition of Wnt signaling. Interacts with SOX9; inhibiting CTNNB1 activity by competing with the binding sites of TCF/LEF within CTNNB1, thereby inhibiting the Wnt signaling. Interacts with SPN/CD43 cytoplasmic tail. Interacts (when phosphorylated at Tyr-333) with isoform M2 of PKM (PKM2); promoting transcription activation. Interacts with PKP2 (via HEAD domain). Interacts with CDH1. Interacts (when unphosphorylated) with FLYWCH1, perhaps preventing interaction of CTNNB1 with TCF4, and thereby regulating transcription activation; phosphorylation of CTNNB1 may inhibit the interaction. Interacts (via the central armadillo domains) with probable transcriptional regulator ADNP (via N-terminal region); interaction is direct and stabilizes CTNNB1 by modulating its phosphorylation by glycogen synthase kinase-3 beta GSK3B. Interacts with NR5A2. Interacts with DSG2; the interaction promotes localization of CTNNB1 at cell junctions thus reducing its nuclear localization and subsequent transcription of CTNNB1/TCF-target genes. Phosphorylation by GSK3B requires prior phosphorylation of Ser-45 by another kinase. Phosphorylation proceeds then from Thr-41 to Ser-33. Phosphorylated by NEK2. EGF stimulates tyrosine phosphorylation. Phosphorylated on Ser-33 and Ser-37 by HIPK2. This phosphorylation triggers proteasomal degradation. Phosphorylation at Ser-552 by AMPK promotes stabilization of the protein, enhancing TCF/LEF-mediated transcription. Phosphorylation on Ser-191 and Ser-246 by CDK5. Phosphorylation by CDK2 regulates insulin internalization. Phosphorylation by PTK6 at Tyr-64, Tyr-142, Tyr-331 and/or Tyr-333 with the predominant site at Tyr-64 is not essential for inhibition of transcriptional activity. Phosphorylation by SRC at Tyr-333 promotes interaction with isoform M2 of PKM (PKM2); promoting transcription activation. Post-translationally, ubiquitinated by the SCF(BTRC) E3 ligase complex when phosphorylated by GSK3B, leading to its degradation. Ubiquitinated by a E3 ubiquitin ligase complex containing UBE2D1, SIAH1, CACYBP/SIP, SKP1, APC and TBL1X, leading to its subsequent proteasomal degradation. Ubiquitinated and degraded following interaction with SOX9. Ubiquitinated via 'Lys-11'- and 'Lys-29'-linked ubiquitin chains by UBR5, leading to its stabilization. In terms of processing, S-nitrosylation at Cys-619 within adherens junctions promotes VEGF-induced, NO-dependent endothelial cell permeability by disrupting interaction with E-cadherin, thus mediating disassembly adherens junctions. O-glycosylation at Ser-23 decreases nuclear localization and transcriptional activity, and increases localization to the plasma membrane and interaction with E-cadherin CDH1. Post-translationally, deacetylated at Lys-49 by SIRT1.

It localises to the cytoplasm. The protein resides in the nucleus. The protein localises to the cytoskeleton. It is found in the cell junction. Its subcellular location is the adherens junction. It localises to the cell membrane. The protein resides in the microtubule organizing center. The protein localises to the centrosome. It is found in the spindle pole. Its subcellular location is the synapse. It localises to the cilium basal body. Key downstream component of the canonical Wnt signaling pathway. In the absence of Wnt, forms a complex with AXIN1, AXIN2, APC, CSNK1A1 and GSK3B that promotes phosphorylation on N-terminal Ser and Thr residues and ubiquitination of CTNNB1 via BTRC and its subsequent degradation by the proteasome. In the presence of Wnt ligand, CTNNB1 is not ubiquitinated and accumulates in the nucleus, where it acts as a coactivator for transcription factors of the TCF/LEF family, leading to activate Wnt responsive genes. Also acts as a coactivator for other transcription factors, such as NR5A2. Promotes epithelial to mesenchymal transition/mesenchymal to epithelial transition (EMT/MET) via driving transcription of CTNNB1/TCF-target genes. Involved in the regulation of cell adhesion, as component of an E-cadherin:catenin adhesion complex. Acts as a negative regulator of centrosome cohesion. Involved in the CDK2/PTPN6/CTNNB1/CEACAM1 pathway of insulin internalization. Blocks anoikis of malignant kidney and intestinal epithelial cells and promotes their anchorage-independent growth by down-regulating DAPK2. Disrupts PML function and PML-NB formation by inhibiting RANBP2-mediated sumoylation of PML. Promotes neurogenesis by maintaining sympathetic neuroblasts within the cell cycle. Involved in chondrocyte differentiation via interaction with SOX9: SOX9-binding competes with the binding sites of TCF/LEF within CTNNB1, thereby inhibiting the Wnt signaling. Acts as a positive regulator of odontoblast differentiation during mesenchymal tooth germ formation, via promoting the transcription of differentiation factors such as LEF1, BMP2 and BMP4. Activity is repressed in a MSX1-mediated manner at the bell stage of mesenchymal tooth germ formation which prevents premature differentiation of odontoblasts. In Bos taurus (Bovine), this protein is Catenin beta-1.